A 274-amino-acid polypeptide reads, in one-letter code: uncharacterized protein (274 aa).

This is an uncharacterized protein from Rhodobacter capsulatus (Rhodopseudomonas capsulata).